We begin with the raw amino-acid sequence, 344 residues long: Glycerol-3-phosphate dehydrogenase [NAD(P)+] (344 aa).

Positions 18, 19, 39, and 113 each coordinate NADPH. Sn-glycerol 3-phosphate-binding residues include Lys113, Gly142, and Thr144. Ala146 provides a ligand contact to NADPH. Sn-glycerol 3-phosphate contacts are provided by Lys198, Asp251, Ser261, Arg262, and Asn263. Catalysis depends on Lys198, which acts as the Proton acceptor. An NADPH-binding site is contributed by Arg262. Positions 286 and 288 each coordinate NADPH.

It belongs to the NAD-dependent glycerol-3-phosphate dehydrogenase family.

It is found in the cytoplasm. It catalyses the reaction sn-glycerol 3-phosphate + NAD(+) = dihydroxyacetone phosphate + NADH + H(+). The catalysed reaction is sn-glycerol 3-phosphate + NADP(+) = dihydroxyacetone phosphate + NADPH + H(+). It participates in membrane lipid metabolism; glycerophospholipid metabolism. Its function is as follows. Catalyzes the reduction of the glycolytic intermediate dihydroxyacetone phosphate (DHAP) to sn-glycerol 3-phosphate (G3P), the key precursor for phospholipid synthesis. This is Glycerol-3-phosphate dehydrogenase [NAD(P)+] from Blochmanniella pennsylvanica (strain BPEN).